The primary structure comprises 289 residues: Pyridoxal kinase PdxY (289 aa).

Substrate contacts are provided by residues S9 and 44–45; that span reads TQ. The ATP site is built by D112, A144, E149, and K182. Substrate is bound at residue D225.

It belongs to the pyridoxine kinase family. PdxY subfamily. Homodimer. Requires Mg(2+) as cofactor.

It carries out the reaction pyridoxal + ATP = pyridoxal 5'-phosphate + ADP + H(+). It functions in the pathway cofactor metabolism; pyridoxal 5'-phosphate salvage; pyridoxal 5'-phosphate from pyridoxal: step 1/1. Functionally, pyridoxal kinase involved in the salvage pathway of pyridoxal 5'-phosphate (PLP). Catalyzes the phosphorylation of pyridoxal to PLP. The polypeptide is Pyridoxal kinase PdxY (Aliivibrio fischeri (strain ATCC 700601 / ES114) (Vibrio fischeri)).